Consider the following 454-residue polypeptide: Bleomycin hydrolase (454 aa).

At methionine 1 the chain carries N-acetylmethionine. Active-site residues include cysteine 73 and histidine 372. Lysine 391 is subject to N6-acetyllysine. Asparagine 396 is a catalytic residue.

This sequence belongs to the peptidase C1 family. Homohexamer. Interacts with NUDT12 (via ANK repeats). In terms of tissue distribution, expressed at relatively higher levels in the stomach, esophagus, spleen, thymus and testis, and at lower levels in the skin, lung and skeletal muscle.

The protein resides in the cytoplasm. It localises to the cytoplasmic granule. It carries out the reaction Inactivates bleomycin B2 (a cytotoxic glycometallopeptide) by hydrolysis of a carboxyamide bond of beta-aminoalanine, but also shows general aminopeptidase activity. The specificity varies somewhat with source, but amino acid arylamides of Met, Leu and Ala are preferred.. The normal physiological role of BLM hydrolase is unknown, but it catalyzes the inactivation of the antitumor drug BLM (a glycopeptide) by hydrolyzing the carboxamide bond of its B-aminoalaninamide moiety thus protecting normal and malignant cells from BLM toxicity. Binds single-stranded DNA with higher affinity than double-stranded DNA. May play an important role in the metabolism of antibiotics. In Rattus norvegicus (Rat), this protein is Bleomycin hydrolase (Blmh).